We begin with the raw amino-acid sequence, 988 residues long: Bifunctional glutamine synthetase adenylyltransferase/adenylyl-removing enzyme (988 aa).

The tract at residues 1-472 (MTKRETVERR…RYSALFEQET (472 aa)) is adenylyl removase. Residues 476–988 (GEAGNLVFTG…AFVAVVKNGG (513 aa)) form an adenylyl transferase region.

The protein belongs to the GlnE family. Requires Mg(2+) as cofactor.

It carries out the reaction [glutamine synthetase]-O(4)-(5'-adenylyl)-L-tyrosine + phosphate = [glutamine synthetase]-L-tyrosine + ADP. It catalyses the reaction [glutamine synthetase]-L-tyrosine + ATP = [glutamine synthetase]-O(4)-(5'-adenylyl)-L-tyrosine + diphosphate. Functionally, involved in the regulation of glutamine synthetase GlnA, a key enzyme in the process to assimilate ammonia. When cellular nitrogen levels are high, the C-terminal adenylyl transferase (AT) inactivates GlnA by covalent transfer of an adenylyl group from ATP to specific tyrosine residue of GlnA, thus reducing its activity. Conversely, when nitrogen levels are low, the N-terminal adenylyl removase (AR) activates GlnA by removing the adenylyl group by phosphorolysis, increasing its activity. The regulatory region of GlnE binds the signal transduction protein PII (GlnB) which indicates the nitrogen status of the cell. The sequence is that of Bifunctional glutamine synthetase adenylyltransferase/adenylyl-removing enzyme from Agrobacterium fabrum (strain C58 / ATCC 33970) (Agrobacterium tumefaciens (strain C58)).